A 108-amino-acid polypeptide reads, in one-letter code: MMIAIGLFLLAGLAEIAGGYLVWLWLRESKPLWYGLAGGLTLIIYGVIPAFQAFPSFGRVYAAYGGVFIILAVLWGWLVDKKTPDLYDWAGAVICLAGVSVMLWAPRG.

4 consecutive transmembrane segments (helical) span residues 3–23 (IAIG…YLVW), 31–51 (PLWY…IPAF), 60–80 (VYAA…WLVD), and 86–106 (LYDW…LWAP).

The protein belongs to the UPF0060 family.

It is found in the cell membrane. The chain is UPF0060 membrane protein BLi00854/BL03049 from Bacillus licheniformis (strain ATCC 14580 / DSM 13 / JCM 2505 / CCUG 7422 / NBRC 12200 / NCIMB 9375 / NCTC 10341 / NRRL NRS-1264 / Gibson 46).